Consider the following 278-residue polypeptide: Fasciclin-like arabinogalactan protein 5 (278 aa).

An N-terminal signal peptide occupies residues 1-24; sequence MGLKASLSLLSLTILLVFSKVVTA. In terms of domain architecture, FAS1 spans 25 to 169; sequence NNITLAFQKY…LSIIQITMPI (145 aa). N-linked (GlcNAc...) asparagine glycosylation is found at N26, N74, N126, and N159. The segment at 199 to 257 is disordered; it reads VVPAPGPAADDNSPDSAVPKTPPAPATDTPEADSPAPAPSADNEKIEAADKAKPSSSAS. Over residues 224–239 the composition is skewed to low complexity; the sequence is ATDTPEADSPAPAPSA. The span at 240-251 shows a compositional bias: basic and acidic residues; that stretch reads DNEKIEAADKAK. S255 is lipidated: GPI-anchor amidated serine. Positions 256 to 278 are cleaved as a propeptide — removed in mature form; it reads ASKAGWSFDVILLLAFLASFAGF.

It belongs to the fasciclin-like AGP family.

The protein resides in the cell membrane. Its function is as follows. May be a cell surface adhesion protein. In Arabidopsis thaliana (Mouse-ear cress), this protein is Fasciclin-like arabinogalactan protein 5 (FLA5).